The chain runs to 195 residues: Molybdenum cofactor guanylyltransferase (195 aa).

GTP-binding positions include 12-14 (LAG), K25, N53, D70, and D100. Residue D100 coordinates Mg(2+).

This sequence belongs to the MobA family. In terms of assembly, monomer. It depends on Mg(2+) as a cofactor.

It localises to the cytoplasm. It catalyses the reaction Mo-molybdopterin + GTP + H(+) = Mo-molybdopterin guanine dinucleotide + diphosphate. Transfers a GMP moiety from GTP to Mo-molybdopterin (Mo-MPT) cofactor (Moco or molybdenum cofactor) to form Mo-molybdopterin guanine dinucleotide (Mo-MGD) cofactor. In Vibrio parahaemolyticus serotype O3:K6 (strain RIMD 2210633), this protein is Molybdenum cofactor guanylyltransferase.